Reading from the N-terminus, the 387-residue chain is MALVMLARAPAPPLLLPSPNPPPCALPQDLTSLVSPSEPPDPPDPPDYLVGASNSFLSILLLRSSDLGSDLVQALSPLDLGFALRSITAVCSSWYQVFPLACLELWFSIPHLSHPLVTLSKGFVSLKGSNFFEFFTFFWNMPSFILQFPHHEDVMISTSFRLVLPQYEAVMILLKLKLFLPHYEDVLFSIGLRIQLLLPQYEVGLILYKLRLLLPHYEDVIQKLWLRAIHVIVSLVWFLEISRRIKEKTYDVLTRNDLGSWTPDLFIEKWWFSQPHTSPKLRFFSHLVGSRSWCFVAYAIVAVFHDAFYPLEDVASPDSRSPSVLSYFRKLISCFSTIGVSNFSCLTVMYVFIFFFRAFRMPFVAVVSLAFVASLMYLLNHFSIVGE.

Positions Pro10–Ala25 are enriched in pro residues. The disordered stretch occupies residues Pro10–Pro45. 8 consecutive transmembrane segments (helical) span residues Val97–Val117, Gly128–Phe148, Val154–Leu174, Val186–Ile206, Ile221–Ile241, Ser292–Glu312, Phe335–Phe355, and Pro362–Phe382.

The protein resides in the membrane. The polypeptide is Putative transmembrane protein At3g54730 (Arabidopsis thaliana (Mouse-ear cress)).